Here is a 419-residue protein sequence, read N- to C-terminus: Putative L-glutamine:3-amino-2,3-dideoxy-scyllo-inosose aminotransferase (419 aa).

The residue at position 199 (K199) is an N6-(pyridoxal phosphate)lysine.

Belongs to the DegT/DnrJ/EryC1 family. L-glutamine:2-deoxy-scyllo-inosose/scyllo-inosose aminotransferase subfamily. It depends on pyridoxal 5'-phosphate as a cofactor.

It carries out the reaction 3-amino-2,3-dideoxy-scyllo-inosose + L-glutamine = 2-deoxystreptamine + 2-oxoglutaramate. Its pathway is metabolic intermediate biosynthesis; 2-deoxystreptamine biosynthesis; 2-deoxystreptamine from D-glucose 6-phosphate: step 4/4. It participates in antibiotic biosynthesis; kanamycin biosynthesis. Functionally, catalyzes the transamination of 3-amino-2,3-dideoxy-scyllo-inosose (amino-DOI) into 2-deoxystreptamine (DOS). This is Putative L-glutamine:3-amino-2,3-dideoxy-scyllo-inosose aminotransferase (kanD) from Streptomyces kanamyceticus.